Reading from the N-terminus, the 359-residue chain is Probable dual-specificity RNA methyltransferase RlmN (359 aa).

Glu-100 (proton acceptor) is an active-site residue. The 235-residue stretch at 106 to 340 folds into the Radical SAM core domain; it reads TDKRLTVCVS…VSVRASRGRD (235 aa). Cysteines 113 and 345 form a disulfide. Residues Cys-120, Cys-124, and Cys-127 each contribute to the [4Fe-4S] cluster site. S-adenosyl-L-methionine is bound by residues 167-168, Ser-197, 226-228, and Asn-302; these read GE and SLH. Catalysis depends on Cys-345, which acts as the S-methylcysteine intermediate.

The protein belongs to the radical SAM superfamily. RlmN family. [4Fe-4S] cluster is required as a cofactor.

The protein localises to the cytoplasm. The catalysed reaction is adenosine(2503) in 23S rRNA + 2 reduced [2Fe-2S]-[ferredoxin] + 2 S-adenosyl-L-methionine = 2-methyladenosine(2503) in 23S rRNA + 5'-deoxyadenosine + L-methionine + 2 oxidized [2Fe-2S]-[ferredoxin] + S-adenosyl-L-homocysteine. The enzyme catalyses adenosine(37) in tRNA + 2 reduced [2Fe-2S]-[ferredoxin] + 2 S-adenosyl-L-methionine = 2-methyladenosine(37) in tRNA + 5'-deoxyadenosine + L-methionine + 2 oxidized [2Fe-2S]-[ferredoxin] + S-adenosyl-L-homocysteine. In terms of biological role, specifically methylates position 2 of adenine 2503 in 23S rRNA and position 2 of adenine 37 in tRNAs. This chain is Probable dual-specificity RNA methyltransferase RlmN, found in Prochlorococcus marinus (strain NATL2A).